The following is a 689-amino-acid chain: Ataxin-1-like (689 aa).

Residues 1-19 are compositionally biased toward basic and acidic residues; sequence MKPVHERSQECLPPKKRDL. 3 disordered regions span residues 1-46, 185-223, and 242-297; these read MKPV…SEWS, ATPPPQAPSPAHSFNKAPSATSPSGQLPHHSSTQPLDLA, and LHET…GEGQ. An interaction with NCOR2 and ATXN1 region spans residues 20–197; it reads PVTSEDMGRT…PPQAPSPAHS (178 aa). Residues 20–197 are self-association; sequence PVTSEDMGRT…PPQAPSPAHS (178 aa). Polar residues-rich tracts occupy residues 28–43 and 200–219; these read RTTSCSTNHTPSSDAS and KAPSATSPSGQLPHHSSTQP. Residues 257–268 show a composition bias toward low complexity; the sequence is QESQSALEAAAA. Residues 273–285 show a composition bias toward basic and acidic residues; it reads RPRERNLVRRESE. Ser284 carries the phosphoserine modification. Thr330 is subject to Phosphothreonine. The tract at residues 357–405 is disordered; it reads KEEPSPLNLSHHTPDHQGEGRGSARNPAELAEKSQARGFYPQSHQEPVK. A Phosphoserine modification is found at Ser361. Positions 457 to 588 constitute an AXH domain; the sequence is PPPITSSHLP…SISLQSLNSN (132 aa). Position 615 is a phosphoserine (Ser615). The disordered stretch occupies residues 617–647; sequence ELCDSEGKSQPAGEGSRVVEPSQPESGAQAC.

It belongs to the ATXN1 family. Homodimer. Interacts with CIC. Interacts (via AXH domain) with NCOR2. Interacts with ATXN1. Directly interacts with RBPJ; this interaction is disrupted in the presence of Notch intracellular domain. Competes with ATXN1 for RBPJ-binding. Found in a complex with CIC and ATXN1. In terms of tissue distribution, expressed in cerebellum and cerebral cortex.

It localises to the nucleus. It is found in the cell projection. The protein localises to the dendrite. In terms of biological role, chromatin-binding factor that repress Notch signaling in the absence of Notch intracellular domain by acting as a CBF1 corepressor. Binds to the HEY promoter and might assist, along with NCOR2, RBPJ-mediated repression. Can suppress ATXN1 cytotoxicity in spinocerebellar ataxia type 1 (SCA1). In concert with CIC and ATXN1, involved in brain development. The sequence is that of Ataxin-1-like (ATXN1L) from Homo sapiens (Human).